Reading from the N-terminus, the 529-residue chain is Zinc finger CCCH domain-containing protein 65 (529 aa).

The span at 1-10 (MADADARAPP) shows a compositional bias: basic and acidic residues. 2 disordered regions span residues 1–36 (MADA…EDEV) and 134–179 (PARK…GSYV). Residues 14–31 (PGATPIGSISPSSAAPAA) are compositionally biased toward low complexity. 3 consecutive C3H1-type zinc fingers follow at residues 108 to 136 (RPGE…HPAR), 237 to 265 (GSSQ…HRDG), and 285 to 313 (RPGE…HPDP). Residues 313 to 347 (PSNVASKDPQLEHENGDAPQQDVQGSSSQPNASIW) are disordered. Residues 333–344 (QDVQGSSSQPNA) show a composition bias toward polar residues. 2 C3H1-type zinc fingers span residues 433-461 (RPGQ…HPRS) and 477-505 (KPDQ…HPFN).

This chain is Zinc finger CCCH domain-containing protein 65, found in Oryza sativa subsp. japonica (Rice).